The sequence spans 122 residues: Large ribosomal subunit protein bL17 (122 aa).

This sequence belongs to the bacterial ribosomal protein bL17 family. In terms of assembly, part of the 50S ribosomal subunit. Contacts protein L32.

The protein is Large ribosomal subunit protein bL17 of Wigglesworthia glossinidia brevipalpis.